The chain runs to 3189 residues: Beauvericin nonribosomal cyclodepsipeptide synthetase (3189 aa).

Positions 73 to 466 (HAMYEISQHV…EQLQSAADDA (394 aa)) are condensation 1. The disordered stretch occupies residues 202-223 (DSLPLTPDSSGGSDSDSPSTLK). The segment covering 208 to 220 (PDSSGGSDSDSPS) has biased composition (low complexity). Residues 507-901 (AESPSDPAVL…GRIDSQVKIR (395 aa)) are adenylation 1. One can recognise a Carrier 1 domain in the interval 1036–1112 (TLETGPEARL…RLQAVMSGDS (77 aa)). The residue at position 1073 (serine 1073) is an O-(pantetheine 4'-phosphoryl)serine. A condensation 2 region spans residues 1136 to 1569 (SYSQGRLWFL…KSLISVLPLT (434 aa)). An adenylation 2 region spans residues 1599–2004 (FRSQVATCPD…GRMDFQFKIR (406 aa)). Positions 2072–2211 (MYNGIDAISP…FPTVEYLTRV (140 aa)) are S-adenosyl-L-methionine-dependent N-methyltransferase. Carrier domains lie at 2557–2631 (CPIS…REGL) and 2654–2728 (APRN…ELGQ). Residues serine 2591 and serine 2688 each carry the O-(pantetheine 4'-phosphoryl)serine modification. The segment at 2773 to 3181 (QDVYPATHMQ…AYLMEEVCRL (409 aa)) is condensation 3.

The protein belongs to the NRP synthetase family.

It catalyses the reaction 3 (R)-2-hydroxy-3-methylbutanoate + 3 L-phenylalanine + 3 S-adenosyl-L-methionine + 6 ATP = beauvericin + 6 AMP + 3 S-adenosyl-L-homocysteine + 6 diphosphate + 6 H(+). In terms of biological role, beauvericin nonribosomal cyclodepsipeptide synthetase; part of the gene cluster that mediates the biosynthesis of beauvericin (BEA), a non-ribosomal cyclic hexadepsipeptide that shows antibiotic, antifungal, insecticidal, and cancer cell antiproliferative and antihaptotactic activity. Ketoisovalerate reductase BEA2 catalyzes the NADPH-specific reduction of ketoisovaleric acid to hydroxyisovalerate, a precursor for beauvericin biosynthesis. The nonribosomal cyclodepsipeptide synthetase BEA1 then catalyzes the formation of beauvericin via condensation and cyclization of 3 dipeptidol monomers, each composed of one unit of hydroxyisovalerate and one unit of N-methyl-phenylalanine. The polypeptide is Beauvericin nonribosomal cyclodepsipeptide synthetase (Beas) (Beauveria bassiana (White muscardine disease fungus)).